We begin with the raw amino-acid sequence, 108 residues long: UPF0060 membrane protein Mflv_3127 (108 aa).

The next 4 membrane-spanning stretches (helical) occupy residues 7 to 27 (LLFVLAAVLEIGGAWLVWQGF), 32 to 52 (GWLWVGAGVLALGAYGFVAAF), 61 to 81 (VLAAYGGVFVAGSLIWGMVAD), and 87 to 107 (RWDITGAAVCLLGVVLIMYAP).

Belongs to the UPF0060 family.

The protein resides in the cell membrane. The polypeptide is UPF0060 membrane protein Mflv_3127 (Mycolicibacterium gilvum (strain PYR-GCK) (Mycobacterium gilvum (strain PYR-GCK))).